We begin with the raw amino-acid sequence, 845 residues long: ATP-binding cassette sub-family F member 1 (845 aa).

The segment at 1-261 (MPKAPKQQPP…HLSKKEKKKL (261 aa)) is disordered. 2 positions are modified to phosphoserine: Ser-22 and Ser-24. Positions 29-39 (KKGKKDKKIKK) are enriched in basic residues. Over residues 47-64 (VEDKQAGEEEKVLKEKEQ) the composition is skewed to basic and acidic residues. Basic residues predominate over residues 73 to 85 (QKKKRDTRKGRRK). Ser-105 is modified (phosphoserine). Thr-108 carries the post-translational modification Phosphothreonine. Ser-109 and Ser-140 each carry phosphoserine; by CK2. Residues 147–160 (EKHPPKPAKPEKNR) show a composition bias toward basic and acidic residues. Position 166 is a phosphoserine (Ser-166). Residues 206-226 (EIIKEKEPPKQGKEKAKKAEQ) show a composition bias toward basic and acidic residues. Residues 227 to 241 (GSEEEGEGEEEEEEG) show a composition bias toward acidic residues. Ser-228 carries the post-translational modification Phosphoserine. One can recognise an ABC transporter 1 domain in the interval 304–548 (IKLEKFSISA…MYQQKQKELL (245 aa)). 336-343 (GPNGKGKT) is an ATP binding site. Positions 559–580 (KELKAGGKSTKQAEKQTKEALT) are enriched in basic and acidic residues. The interval 559 to 602 (KELKAGGKSTKQAEKQTKEALTRKQQKCRRKNQDEESQEAPELL) is disordered. Ser-595 carries the post-translational modification Phosphoserine. The 216-residue stretch at 625 to 840 (LGLHGVTFGY…VLEALGEVMV (216 aa)) folds into the ABC transporter 2 domain. 658 to 665 (GPNGVGKS) serves as a coordination point for ATP.

It belongs to the ABC transporter superfamily. ABCF family. EF3 subfamily. As to quaternary structure, isoform 2 interacts (via N-terminus) with EIF2S1; the interaction is independent of its phosphorylated status. Isoform 2 associates (via both ABC transporter domains) with the ribosomes. In terms of processing, isoform 2 is phosphorylated at phosphoserine and phosphothreonine. Isoform 2 phosphorylation on Ser-109 and Ser-140 by CK2 inhibits association of EIF2 with ribosomes. As to expression, ubiquitous.

Its subcellular location is the cytoplasm. The protein localises to the nucleus. It is found in the nucleoplasm. It localises to the nucleus envelope. Its function is as follows. Isoform 2 is required for efficient Cap- and IRES-mediated mRNA translation initiation. Isoform 2 is not involved in the ribosome biogenesis. The chain is ATP-binding cassette sub-family F member 1 (ABCF1) from Homo sapiens (Human).